Consider the following 566-residue polypeptide: Proline--tRNA ligase 1 (566 aa).

This sequence belongs to the class-II aminoacyl-tRNA synthetase family. ProS type 1 subfamily. As to quaternary structure, homodimer.

It is found in the cytoplasm. It carries out the reaction tRNA(Pro) + L-proline + ATP = L-prolyl-tRNA(Pro) + AMP + diphosphate. Its function is as follows. Catalyzes the attachment of proline to tRNA(Pro) in a two-step reaction: proline is first activated by ATP to form Pro-AMP and then transferred to the acceptor end of tRNA(Pro). As ProRS can inadvertently accommodate and process non-cognate amino acids such as alanine and cysteine, to avoid such errors it has two additional distinct editing activities against alanine. One activity is designated as 'pretransfer' editing and involves the tRNA(Pro)-independent hydrolysis of activated Ala-AMP. The other activity is designated 'posttransfer' editing and involves deacylation of mischarged Ala-tRNA(Pro). The misacylated Cys-tRNA(Pro) is not edited by ProRS. This chain is Proline--tRNA ligase 1, found in Bacillus cereus (strain ZK / E33L).